Consider the following 159-residue polypeptide: Large ribosomal subunit protein uL22 (159 aa).

It belongs to the universal ribosomal protein uL22 family. Part of the 50S ribosomal subunit.

In terms of biological role, this protein binds specifically to 23S rRNA. It makes multiple contacts with different domains of the 23S rRNA in the assembled 50S subunit and ribosome. Its function is as follows. The globular domain of the protein is located near the polypeptide exit tunnel on the outside of the subunit, while an extended beta-hairpin is found that lines the wall of the exit tunnel in the center of the 70S ribosome. This Methanopyrus kandleri (strain AV19 / DSM 6324 / JCM 9639 / NBRC 100938) protein is Large ribosomal subunit protein uL22.